A 293-amino-acid polypeptide reads, in one-letter code: 4-hydroxy-tetrahydrodipicolinate synthase (293 aa).

Residue threonine 50 participates in pyruvate binding. Tyrosine 138 (proton donor/acceptor) is an active-site residue. Lysine 166 acts as the Schiff-base intermediate with substrate in catalysis. Valine 206 lines the pyruvate pocket.

This sequence belongs to the DapA family. As to quaternary structure, homotetramer; dimer of dimers.

The protein localises to the cytoplasm. It catalyses the reaction L-aspartate 4-semialdehyde + pyruvate = (2S,4S)-4-hydroxy-2,3,4,5-tetrahydrodipicolinate + H2O + H(+). Its pathway is amino-acid biosynthesis; L-lysine biosynthesis via DAP pathway; (S)-tetrahydrodipicolinate from L-aspartate: step 3/4. Its function is as follows. Catalyzes the condensation of (S)-aspartate-beta-semialdehyde [(S)-ASA] and pyruvate to 4-hydroxy-tetrahydrodipicolinate (HTPA). This is 4-hydroxy-tetrahydrodipicolinate synthase from Cutibacterium acnes (strain DSM 16379 / KPA171202) (Propionibacterium acnes).